The primary structure comprises 212 residues: ATP phosphoribosyltransferase (212 aa).

It belongs to the ATP phosphoribosyltransferase family. Short subfamily. As to quaternary structure, heteromultimer composed of HisG and HisZ subunits.

The protein localises to the cytoplasm. The enzyme catalyses 1-(5-phospho-beta-D-ribosyl)-ATP + diphosphate = 5-phospho-alpha-D-ribose 1-diphosphate + ATP. The protein operates within amino-acid biosynthesis; L-histidine biosynthesis; L-histidine from 5-phospho-alpha-D-ribose 1-diphosphate: step 1/9. Catalyzes the condensation of ATP and 5-phosphoribose 1-diphosphate to form N'-(5'-phosphoribosyl)-ATP (PR-ATP). Has a crucial role in the pathway because the rate of histidine biosynthesis seems to be controlled primarily by regulation of HisG enzymatic activity. The polypeptide is ATP phosphoribosyltransferase (Clostridium botulinum (strain Okra / Type B1)).